The sequence spans 54 residues: MSPQTETKASVGFKAGVKDYKLTYYTPDYVTKDTDILAAFRVSPQPGVPPEEAG.

The propeptide occupies 1-2; that stretch reads MS. P3 carries the N-acetylproline modification. K14 carries the N6,N6,N6-trimethyllysine modification.

The protein belongs to the RuBisCO large chain family. Type I subfamily. Heterohexadecamer of 8 large chains and 8 small chains.

It is found in the plastid. It localises to the chloroplast. The catalysed reaction is 2 (2R)-3-phosphoglycerate + 2 H(+) = D-ribulose 1,5-bisphosphate + CO2 + H2O. It carries out the reaction D-ribulose 1,5-bisphosphate + O2 = 2-phosphoglycolate + (2R)-3-phosphoglycerate + 2 H(+). Functionally, ruBisCO catalyzes two reactions: the carboxylation of D-ribulose 1,5-bisphosphate, the primary event in carbon dioxide fixation, as well as the oxidative fragmentation of the pentose substrate in the photorespiration process. Both reactions occur simultaneously and in competition at the same active site. The chain is Ribulose bisphosphate carboxylase large chain (rbcL) from Ilex aquifolium (English holly).